The primary structure comprises 717 residues: MKNASRIFKGPLIWILLCIGLIIVFLQFAGSGNGYKDIPTSEAVSIINSSKKLDSVTLTDGDQVIKITENENKKYRSYWVGNQSDQLVDRLNDRVKAKTLKSWQGENPGQSIWKALLINFLPFVIILLFFLWAMNAAQGMGGRGGVMGFGKSKAKVGSKDTPKSTFADVAGCQEAIDELQEIREFLAEPAKFQRVGAKIPKGVLLYGPPGTGKTLLARAVAGEAGVPFFSISGSDFVEMFVGVGASRVRDLFEQAKEAAPAIIFIDEIDAVGRHRGAGMGGGHDEREQTLNQLLVEMDGFDVHGGVILIAATNRPDVLDPALLRPGRFDRQIAVEAPDLDGRLKILKVHAHGKPMADDVDLASIARRTPGMTGADLANVLNEAALLTARANLPVIGNSELDEAIDRVIAGPQKKTRLMNQHERLVTAYHEGGHALVAAAMPGTDPVQKITILPRGRALGYTMVMPDSDKYSQTRSELLDSMAYMMGGRAAEELIFHDPSTGASNDIEKATKVARALVTQYGLSARVGTVQLGSGDTEPFLGMTAGQQRDYSDETAKIIDDEVRELLENAHQEAFDCLDANREVLDELVRQLFARETLSKAEVADIFKPLKRWPERGAFTGSDKRVPSSIPPVKPPQIAGVDEDAPEVGAPRRGVIAPPTPEPGGDLPGDNPGEWEPPSDWQPPSVGGGKSPEPPSPTHPGEGPQPPSNGNPWGPPRS.

The Cytoplasmic segment spans residues 1–9 (MKNASRIFK). A helical transmembrane segment spans residues 10–30 (GPLIWILLCIGLIIVFLQFAG). The Extracellular portion of the chain corresponds to 31 to 111 (SGNGYKDIPT…SWQGENPGQS (81 aa)). A helical membrane pass occupies residues 112 to 132 (IWKALLINFLPFVIILLFFLW). At 133 to 717 (AMNAAQGMGG…NGNPWGPPRS (585 aa)) the chain is on the cytoplasmic side. ATP is bound at residue 207-214 (GPPGTGKT). H429 is a binding site for Zn(2+). The active site involves E430. The Zn(2+) site is built by H433 and D505. Positions 617–717 (AFTGSDKRVP…NGNPWGPPRS (101 aa)) are disordered. The segment covering 691 to 717 (PEPPSPTHPGEGPQPPSNGNPWGPPRS) has biased composition (pro residues).

This sequence in the central section; belongs to the AAA ATPase family. In the C-terminal section; belongs to the peptidase M41 family. As to quaternary structure, homohexamer. Requires Zn(2+) as cofactor.

The protein resides in the cell membrane. Its function is as follows. Acts as a processive, ATP-dependent zinc metallopeptidase for both cytoplasmic and membrane proteins. Plays a role in the quality control of integral membrane proteins. This Cutibacterium acnes (strain SK137) (Propionibacterium acnes) protein is ATP-dependent zinc metalloprotease FtsH.